The following is a 143-amino-acid chain: FAD synthase (143 aa).

ATP contacts are provided by residues 11 to 12 (TF), 16 to 19 (HPGH), and D94.

The protein belongs to the archaeal FAD synthase family. Homodimer. It depends on a divalent metal cation as a cofactor.

The enzyme catalyses FMN + ATP + H(+) = FAD + diphosphate. Its pathway is cofactor biosynthesis; FAD biosynthesis; FAD from FMN: step 1/1. Catalyzes the transfer of the AMP portion of ATP to flavin mononucleotide (FMN) to produce flavin adenine dinucleotide (FAD) coenzyme. The sequence is that of FAD synthase from Halomicrobium mukohataei (strain ATCC 700874 / DSM 12286 / JCM 9738 / NCIMB 13541) (Haloarcula mukohataei).